The chain runs to 301 residues: Rhodopsin (301 aa).

Residues 1–18 (LHMIHLHWYQYPPMNPMM) lie on the Extracellular side of the membrane. Residues 19 to 43 (YPLLLIFMLFTGILCLAGNFVTIWV) form a helical membrane-spanning segment. At 44–55 (FMNTKSLRTPAN) the chain is on the cytoplasmic side. The helical transmembrane segment at 56-78 (LLVVNLAMSDFLMMFTMFPPMMV) threads the bilayer. At 79–92 (TCYYHTWTLGPTFC) the chain is on the extracellular side. The cysteines at positions 92 and 169 are disulfide-linked. The chain crosses the membrane as a helical span at residues 93 to 115 (QVYGFLGNLCGCASIWTMVFITF). A 'Ionic lock' involved in activated form stabilization motif is present at residues 116 to 118 (DRY). At 116 to 134 (DRYNVIVKGVAGEPLSTKK) the chain is on the cytoplasmic side. The chain crosses the membrane as a helical span at residues 135-155 (ASLWILIVWVLSLAWCMAPFF). The Extracellular portion of the chain corresponds to 156–182 (GWNRYVPEGNLTGCGTDYLSEDILSRS). Residue Asn165 is glycosylated (N-linked (GlcNAc...) asparagine). Residues 183-204 (YLYIYSTWVYFLPLTITIYCYV) traverse the membrane as a helical segment. Over 205–245 (FIIKAVAAHEKGMRDQAKKMGIKSLRNEEAQKTSAECRLAK) the chain is Cytoplasmic. A helical transmembrane segment spans residues 246–267 (IAMTTVALWFIAWTPYLLINWV). Topologically, residues 268 to 278 (GMFARSYLSPV) are extracellular. The helical transmembrane segment at 279–300 (YTIWGYVFAKANAVYNPIVYAI) threads the bilayer. Residue Lys288 is modified to N6-(retinylidene)lysine.

Belongs to the G-protein coupled receptor 1 family. Opsin subfamily. In terms of assembly, homodimer. Interacts with GNAQ. Contains one covalently linked retinal chromophore.

It localises to the cell projection. The protein resides in the rhabdomere membrane. Photoreceptor required for image-forming vision at low light intensity. Can use both retinal and 3-dehydroretinal as visual pigment. Light-induced isomerization of 11-cis to all-trans retinal triggers a conformational change that activates signaling via G-proteins. Signaling via GNAQ probably mediates the activation of phospholipase C. This is Rhodopsin (RHO) from Procambarus milleri (Miami cave crayfish).